The following is a 484-amino-acid chain: Glutamyl-tRNA(Gln) amidotransferase subunit A (484 aa).

Active-site charge relay system residues include K77 and S152. The active-site Acyl-ester intermediate is S176.

It belongs to the amidase family. GatA subfamily. In terms of assembly, heterotrimer of A, B and C subunits.

It catalyses the reaction L-glutamyl-tRNA(Gln) + L-glutamine + ATP + H2O = L-glutaminyl-tRNA(Gln) + L-glutamate + ADP + phosphate + H(+). Its function is as follows. Allows the formation of correctly charged Gln-tRNA(Gln) through the transamidation of misacylated Glu-tRNA(Gln) in organisms which lack glutaminyl-tRNA synthetase. The reaction takes place in the presence of glutamine and ATP through an activated gamma-phospho-Glu-tRNA(Gln). In Lacticaseibacillus casei (strain BL23) (Lactobacillus casei), this protein is Glutamyl-tRNA(Gln) amidotransferase subunit A.